Reading from the N-terminus, the 149-residue chain is Ribonuclease-like 3 (149 aa).

The N-terminal stretch at 1–22 is a signal peptide; sequence MGIHQCTAVVLLLLCASLSTYG. A Pyrrolidone carboxylic acid modification is found at Gln23. His38 functions as the Proton acceptor in the catalytic mechanism. Disulfide bonds link Cys48–Cys109, Cys66–Cys120, and Cys84–Cys135. 67 to 71 serves as a coordination point for substrate; the sequence is KEVNT. His142 functions as the Proton donor in the catalytic mechanism.

This sequence belongs to the pancreatic ribonuclease family. Cleavage between Arg-55 and Arg-56 is catalyzed by a membrane-localized Gram-negative bacterium protease (OmpT in E.coli). The excised fragment is then transported to the bacterium cytosol for cleavage of the disulfide bridge linking Cys-48 and Cys-109, thus separating the N-terminal and LF-ZF3. LF-ZF3 but not the N-terminal peptide possesses bactericidal activity. As to expression, strongly expressed in the adult liver and gut, and weakly in the heart and testis.

It localises to the secreted. In terms of biological role, ribonuclease. Angiogenic. Plays a role in host defense. Exhibits strong antibacterial activity against Gram-negative bacteria but mild antibacterial activity against Gram-positive bacteria. The RNase activity is not required for the bactericidal activity. This Danio rerio (Zebrafish) protein is Ribonuclease-like 3.